The sequence spans 267 residues: Tryptophan synthase alpha chain (267 aa).

Residues glutamate 47 and aspartate 58 each act as proton acceptor in the active site.

This sequence belongs to the TrpA family. Tetramer of two alpha and two beta chains.

It catalyses the reaction (1S,2R)-1-C-(indol-3-yl)glycerol 3-phosphate + L-serine = D-glyceraldehyde 3-phosphate + L-tryptophan + H2O. It functions in the pathway amino-acid biosynthesis; L-tryptophan biosynthesis; L-tryptophan from chorismate: step 5/5. Functionally, the alpha subunit is responsible for the aldol cleavage of indoleglycerol phosphate to indole and glyceraldehyde 3-phosphate. This Chlorobaculum parvum (strain DSM 263 / NCIMB 8327) (Chlorobium vibrioforme subsp. thiosulfatophilum) protein is Tryptophan synthase alpha chain.